Here is a 357-residue protein sequence, read N- to C-terminus: MDPIFQSLQTVVDRYDELNEQLADPEIAGDGQKYMALSKEAGEMRETVETYLHYQQVLQDIADAEDLLDDAEMAPLAKEDLNTLKPEKEALESQLKILMLPKDPNDDKNIIMEIRGAAGGDESSLFAADLLDMYRRYAEKQRWTLSIIDETLTEVGGYKEVAVMITGDNVYSKLKFESGAHRVQRVPATETQGRVHTSTATVGVMPEFQEIDFELAESDLEEEFFRSGGAGGQNVNKVSTAVRLVHKPTGIMVKMQEERTQIKNRDKARKLLASRVYDFYAQQNEAEYAEKRKSAVGTGDRSERIRTYNYPQNRVTDHRIGLTLNKLDRVMNGELGEVIDALVIADQTAKLAELNNA.

At Gln-233 the chain carries N5-methylglutamine.

Belongs to the prokaryotic/mitochondrial release factor family. In terms of processing, methylated by PrmC. Methylation increases the termination efficiency of RF1.

The protein resides in the cytoplasm. In terms of biological role, peptide chain release factor 1 directs the termination of translation in response to the peptide chain termination codons UAG and UAA. In Leuconostoc citreum (strain KM20), this protein is Peptide chain release factor 1.